The following is a 336-amino-acid chain: Retinol dehydrogenase 10-B (336 aa).

Residues 7 to 27 form a helical; Signal-anchor membrane-spanning segment; it reads LFVVTFKIIWSFVLAGAKWFI. 40–64 contacts NADP(+); sequence VITGAGSGLGRLFALEFARRRATLV. A substrate-binding site is contributed by S192. Y205 functions as the Proton acceptor in the catalytic mechanism.

It belongs to the short-chain dehydrogenases/reductases (SDR) family.

The protein localises to the microsome membrane. It is found in the endoplasmic reticulum membrane. It carries out the reaction all-trans-retinol + NADP(+) = all-trans-retinal + NADPH + H(+). The protein operates within cofactor metabolism; retinol metabolism. Retinol dehydrogenase with a clear preference for NADP. Converts all-trans-retinol to all-trans-retinal. Has no detectable activity towards 11-cis-retinol, 9-cis-retinol and 13-cis-retinol. The sequence is that of Retinol dehydrogenase 10-B (rdh10b) from Danio rerio (Zebrafish).